The primary structure comprises 108 residues: UPF0145 protein YjfJ (108 aa).

Belongs to the UPF0145 family.

The polypeptide is UPF0145 protein YjfJ (yjfJ) (Lactococcus lactis subsp. lactis (strain IL1403) (Streptococcus lactis)).